A 691-amino-acid chain; its full sequence is Elongation factor G (691 aa).

A tr-type G domain is found at 10–284 (KRLRNIGIAA…AVVDYLPSPL (275 aa)). Residues 19–26 (AHIDAGKT), 83–87 (DTPGH), and 137–140 (NKMD) each bind GTP.

This sequence belongs to the TRAFAC class translation factor GTPase superfamily. Classic translation factor GTPase family. EF-G/EF-2 subfamily.

It is found in the cytoplasm. Its function is as follows. Catalyzes the GTP-dependent ribosomal translocation step during translation elongation. During this step, the ribosome changes from the pre-translocational (PRE) to the post-translocational (POST) state as the newly formed A-site-bound peptidyl-tRNA and P-site-bound deacylated tRNA move to the P and E sites, respectively. Catalyzes the coordinated movement of the two tRNA molecules, the mRNA and conformational changes in the ribosome. This is Elongation factor G (fusA) from Thermus thermophilus (strain ATCC 27634 / DSM 579 / HB8).